The following is a 1222-amino-acid chain: ATP-dependent helicase/nuclease subunit A (1222 aa).

The UvrD-like helicase ATP-binding domain maps to Q39 to Q495. A60 to T67 is a binding site for ATP. One can recognise a UvrD-like helicase C-terminal domain in the interval Q524 to G810.

Belongs to the helicase family. AddA subfamily. Heterodimer of AddA and AddB/RexB. Requires Mg(2+) as cofactor.

It catalyses the reaction Couples ATP hydrolysis with the unwinding of duplex DNA by translocating in the 3'-5' direction.. The enzyme catalyses ATP + H2O = ADP + phosphate + H(+). In terms of biological role, the heterodimer acts as both an ATP-dependent DNA helicase and an ATP-dependent, dual-direction single-stranded exonuclease. Recognizes the chi site generating a DNA molecule suitable for the initiation of homologous recombination. The AddA nuclease domain is required for chi fragment generation; this subunit has the helicase and 3' -&gt; 5' nuclease activities. The polypeptide is ATP-dependent helicase/nuclease subunit A (Streptococcus pyogenes serotype M12 (strain MGAS2096)).